The sequence spans 186 residues: Elongation factor P (186 aa).

Belongs to the elongation factor P family.

Its subcellular location is the cytoplasm. It functions in the pathway protein biosynthesis; polypeptide chain elongation. In terms of biological role, involved in peptide bond synthesis. Stimulates efficient translation and peptide-bond synthesis on native or reconstituted 70S ribosomes in vitro. Probably functions indirectly by altering the affinity of the ribosome for aminoacyl-tRNA, thus increasing their reactivity as acceptors for peptidyl transferase. The chain is Elongation factor P from Streptococcus gordonii (strain Challis / ATCC 35105 / BCRC 15272 / CH1 / DL1 / V288).